We begin with the raw amino-acid sequence, 378 residues long: Chaperone protein DnaJ 2 (378 aa).

The J domain occupies 4-68 (DYYGLLGVSR…EKRRIVDLGG (65 aa)). A CR-type zinc finger spans residues 128–210 (GVTKQVTVDT…CVGDGRVRAR (83 aa)). Residues Cys-141, Cys-144, Cys-158, Cys-161, Cys-184, Cys-187, Cys-198, and Cys-201 each coordinate Zn(2+). 4 CXXCXGXG motif repeats span residues 141–148 (CDRCQGKG), 158–165 (CDTCGGRG), 184–191 (CPTCRGVG), and 198–205 (CCQCVGDG).

It belongs to the DnaJ family. In terms of assembly, homodimer. The cofactor is Zn(2+).

Its subcellular location is the cytoplasm. Participates actively in the response to hyperosmotic and heat shock by preventing the aggregation of stress-denatured proteins and by disaggregating proteins, also in an autonomous, DnaK-independent fashion. Unfolded proteins bind initially to DnaJ; upon interaction with the DnaJ-bound protein, DnaK hydrolyzes its bound ATP, resulting in the formation of a stable complex. GrpE releases ADP from DnaK; ATP binding to DnaK triggers the release of the substrate protein, thus completing the reaction cycle. Several rounds of ATP-dependent interactions between DnaJ, DnaK and GrpE are required for fully efficient folding. Also involved, together with DnaK and GrpE, in the DNA replication of plasmids through activation of initiation proteins. The sequence is that of Chaperone protein DnaJ 2 from Mycobacterium leprae (strain TN).